Consider the following 415-residue polypeptide: ER-derived vesicles protein ERV46 (415 aa).

Over 1 to 24 (MKRSTLLSLDAFAKTEEDVRVRTR) the chain is Cytoplasmic. Residues 25–45 (AGGLITLSCILTTLFLLVNEW) traverse the membrane as a helical segment. Residues 46–376 (GQFNSVVTRP…VINKEQHGQT (331 aa)) lie on the Lumenal side of the membrane. The helical transmembrane segment at 377–397 (WSGFILNCITSIGGVLAVGTV) threads the bilayer. The Cytoplasmic portion of the chain corresponds to 398 to 415 (MDKLFYKAQRSIWGKKSQ). A Phenylalanine-tyrosine motif motif is present at residues 402–403 (FY).

This sequence belongs to the ERGIC family. Interacts with ERV41.

It is found in the endoplasmic reticulum membrane. The protein resides in the golgi apparatus membrane. In terms of biological role, constituent of COPII-coated endoplasmic reticulum-derived transport vesicles. Required for efficient transport of a subset of secretory proteins to the Golgi. The C-terminal Phe-Tyr motif is required for exit from the endoplasmic reticulum. Facilitates retrograde transport from the Golgi to the endoplasmic reticulum. The sequence is that of ER-derived vesicles protein ERV46 (ERV46) from Saccharomyces cerevisiae (strain ATCC 204508 / S288c) (Baker's yeast).